Consider the following 336-residue polypeptide: Ferrochelatase (336 aa).

Fe cation is bound by residues H206 and E287.

The protein belongs to the ferrochelatase family.

It is found in the cytoplasm. The enzyme catalyses heme b + 2 H(+) = protoporphyrin IX + Fe(2+). The protein operates within porphyrin-containing compound metabolism; protoheme biosynthesis; protoheme from protoporphyrin-IX: step 1/1. Catalyzes the ferrous insertion into protoporphyrin IX. This is Ferrochelatase from Neisseria meningitidis serogroup C / serotype 2a (strain ATCC 700532 / DSM 15464 / FAM18).